A 460-amino-acid polypeptide reads, in one-letter code: Malonyl-coenzyme A:anthocyanin 3-O-glucoside-6''-O-malonyltransferase (460 aa).

Residues His173 and Asp400 each act as proton acceptor in the active site.

The protein belongs to the plant acyltransferase family.

It catalyses the reaction an anthocyanidin 3-O-beta-D-glucoside + malonyl-CoA = an anthocyanidin 3-O-(6-O-malonyl-beta-D-glucoside) + CoA. Its activity is regulated as follows. Completely inhibited by 5 mM N-ethylmaleimide or 0.1 mM Cu(2+). Partially inhibited by 0.1 mM Fe(2+) or 0.1 mM Hg(2+). In terms of biological role, catalyzes the transfer of the malonyl group from malonyl-CoA to pelargonidin 3-O-glucoside to produce pelargonidin 3-O-6''-O-malonylglucoside. Can also transfer the malonyl group from malonyl-CoA to cyanidin 3-O-glucoside, delphinidin 3-O-glucoside and quercetin 3-O-glucoside. In Dahlia pinnata (Pinnate dahlia), this protein is Malonyl-coenzyme A:anthocyanin 3-O-glucoside-6''-O-malonyltransferase.